The primary structure comprises 110 residues: UPF0060 membrane protein Bcep1808_1236 (110 aa).

3 helical membrane-spanning segments follow: residues 9 to 29 (ALFA…WLVL), 34 to 54 (PVWL…LLTL), and 66 to 86 (YGGV…GVAL).

It belongs to the UPF0060 family.

It localises to the cell inner membrane. The polypeptide is UPF0060 membrane protein Bcep1808_1236 (Burkholderia vietnamiensis (strain G4 / LMG 22486) (Burkholderia cepacia (strain R1808))).